The sequence spans 499 residues: Serine/threonine-protein phosphatase 5 (499 aa).

Residues 1 to 23 (MAMAEGERTECAEPPRDEPPAEG) form a disordered region. A2 is modified (N-acetylalanine). TPR repeat units follow at residues 28–61 (AEEL…NPSN), 62–95 (AIYY…DKKY), and 96–129 (IKGY…KPND). Residues 200–499 (DQKKLHRKCA…ANTLLQLGMM (300 aa)) are catalytic. Residues D242, H244, and D271 each contribute to the Mg(2+) site. H244 lines the substrate pocket. Residues R275 and 303–304 (NH) each bind substrate. A Mg(2+)-binding site is contributed by N303. Catalysis depends on H304, which acts as the Proton donor/acceptor. H352 is a Mg(2+) binding site. Substrate-binding residues include R400 and H427. A Mg(2+)-binding site is contributed by H427. Residues 495–499 (QLGMM) are required for autoinhibition.

It belongs to the PPP phosphatase family. PP-5 (PP-T) subfamily. In terms of assembly, probably forms a complex composed of chaperones HSP90 and HSP70, co-chaperones STIP1/HOP, CDC37, PPP5C, PTGES3/p23, TSC1 and client protein TSC2. Probably forms a complex composed of chaperones HSP90 and HSP70, co-chaperones CDC37, PPP5C, TSC1 and client protein TSC2, CDK4, AKT, RAF1 and NR3C1; this complex does not contain co-chaperones STIP1/HOP and PTGES3/p23. Part of a complex with HSP90/HSP90AA1 and steroid receptors. Interacts (via TPR repeats) with HSP90AA1 (via TPR repeat-binding motif) or HSPA1A/HSPA1B; the interaction is direct and activates the phosphatase activity. Dissociates from HSPA1A/HSPA1B and HSP90AA1 in response to arachidonic acid. Interacts with CPNE1 (via VWFA domain). Interacts with CDC16, CDC27. Interacts with KLHDC10 (via the 6 Kelch repeats); inhibits the phosphatase activity on MAP3K5. Interacts with ATM and ATR; both interactions are induced by DNA damage and enhance ATM and ATR kinase activity. Interacts with RAD17; reduced by DNA damage. Interacts with nuclear receptors such as NR3C1/GCR and PPARG (activated by agonist); regulates their transactivation activities. Interacts (via TPR repeats) with S100 proteins S100A1, S100A2, S100A6, S100B and S100P; the interactions are calcium-dependent, strongly activate PPP5C phosphatase activity and compete with HSP90AA1 and MAP3K5 interactions. Interacts with SMAD2 and SMAD3 but not with SMAD1; decreases SMAD3 phosphorylation and protein levels. Interacts (via TPR repeats) with CRY1 and CRY2; the interaction with CRY2 down-regulates the phosphatase activity on CSNK1E. Interacts (via TPR repeats) with the active form of RAC1, GNA12 or GNA13; these interactions activate the phosphatase activity and translocate PPP5C to the cell membrane. Interacts with FLCN. Mg(2+) serves as cofactor. Mn(2+) is required as a cofactor. In terms of processing, activated by at least two different proteolytic cleavages producing a 56 kDa and a 50 kDa form. In terms of tissue distribution, predominantly found in brain and, in lower levels, in testis, but was nearly undetectable in spleen, lung, skeletal muscle, kidney and liver.

The protein resides in the nucleus. Its subcellular location is the cytoplasm. It is found in the cell membrane. It carries out the reaction O-phospho-L-seryl-[protein] + H2O = L-seryl-[protein] + phosphate. It catalyses the reaction O-phospho-L-threonyl-[protein] + H2O = L-threonyl-[protein] + phosphate. Autoinhibited. In the autoinhibited state, the TPR domain interacts with the catalytic region and prevents substrate access to the catalytic pocket. Allosterically activated by various polyunsaturated fatty acids, free long-chain fatty-acids and long-chain fatty acyl-CoA esters, arachidonic acid being the most effective activator. HSP90A and probably RAC1, GNA12 and GNA13 can also release the autoinhibition by the TPR repeat. Activation by RAC1, GNA12 and GNA13 is synergistic with the one produced by fatty acids binding. Inhibited by okadaic acid. Serine/threonine-protein phosphatase that dephosphorylates a myriad of proteins involved in different signaling pathways including the kinases CSNK1E, ASK1/MAP3K5, PRKDC and RAF1, the nuclear receptors NR3C1, PPARG, ESR1 and ESR2, SMAD proteins and TAU/MAPT. Implicated in wide ranging cellular processes, including apoptosis, differentiation, DNA damage response, cell survival, regulation of ion channels or circadian rhythms, in response to steroid and thyroid hormones, calcium, fatty acids, TGF-beta as well as oxidative and genotoxic stresses. Participates in the control of DNA damage response mechanisms such as checkpoint activation and DNA damage repair through, for instance, the regulation ATM/ATR-signaling and dephosphorylation of PRKDC and TP53BP1. Inhibits ASK1/MAP3K5-mediated apoptosis induced by oxidative stress. Plays a positive role in adipogenesis, mainly through the dephosphorylation and activation of PPARG transactivation function. Also dephosphorylates and inhibits the anti-adipogenic effect of NR3C1. Regulates the circadian rhythms, through the dephosphorylation and activation of CSNK1E. May modulate TGF-beta signaling pathway by the regulation of SMAD3 phosphorylation and protein expression levels. Dephosphorylates and may play a role in the regulation of TAU/MAPT. Through their dephosphorylation, may play a role in the regulation of ions channels such as KCNH2. Dephosphorylate FNIP1, disrupting interaction with HSP90AA1/Hsp90. The sequence is that of Serine/threonine-protein phosphatase 5 (Ppp5c) from Rattus norvegicus (Rat).